Here is a 203-residue protein sequence, read N- to C-terminus: High frequency lysogenization protein HflD homolog (203 aa).

This sequence belongs to the HflD family.

Its subcellular location is the cytoplasm. It localises to the cell inner membrane. In Aeromonas salmonicida (strain A449), this protein is High frequency lysogenization protein HflD homolog.